Consider the following 266-residue polypeptide: 22 kDa alpha-zein 8 (266 aa).

The first 21 residues, 1–21, serve as a signal peptide directing secretion; sequence MATKILALLALLALFVSATNA.

It belongs to the zein family.

Zeins are major seed storage proteins. The sequence is that of 22 kDa alpha-zein 8 from Zea mays (Maize).